Consider the following 272-residue polypeptide: Shikimate dehydrogenase (NADP(+)) (272 aa).

Shikimate contacts are provided by residues 14–16 (SKS) and T61. K65 (proton acceptor) is an active-site residue. E77 is a binding site for NADP(+). Residues N86 and D102 each contribute to the shikimate site. Residues 126 to 130 (GAGGA), 149 to 154 (NRTVSR), and M213 contribute to the NADP(+) site. A shikimate-binding site is contributed by Y215. G237 provides a ligand contact to NADP(+).

Belongs to the shikimate dehydrogenase family. As to quaternary structure, homodimer.

The catalysed reaction is shikimate + NADP(+) = 3-dehydroshikimate + NADPH + H(+). Its pathway is metabolic intermediate biosynthesis; chorismate biosynthesis; chorismate from D-erythrose 4-phosphate and phosphoenolpyruvate: step 4/7. Its function is as follows. Involved in the biosynthesis of the chorismate, which leads to the biosynthesis of aromatic amino acids. Catalyzes the reversible NADPH linked reduction of 3-dehydroshikimate (DHSA) to yield shikimate (SA). In Escherichia coli O139:H28 (strain E24377A / ETEC), this protein is Shikimate dehydrogenase (NADP(+)).